The primary structure comprises 143 residues: Large ribosomal subunit protein uL16 (143 aa).

The protein belongs to the universal ribosomal protein uL16 family. Part of the 50S ribosomal subunit.

Its function is as follows. Binds 23S rRNA and is also seen to make contacts with the A and possibly P site tRNAs. The sequence is that of Large ribosomal subunit protein uL16 from Oenococcus oeni (strain ATCC BAA-331 / PSU-1).